The sequence spans 655 residues: NADH-ubiquinone oxidoreductase chain 5 (655 aa).

The next 16 helical transmembrane spans lie at 3 to 23 (NAISLIIILPCISWLFPLFFG), 34 to 54 (MTSTLIIITTLITYYYFYQLL), 84 to 104 (LTITMLLAITTISSMVHIYSI), 116 to 136 (FFSLLSMFTFWMIILVTGSNY), 137 to 157 (FVLFVGWEFIGVTSYLLISFW), 180 to 200 (FFVLGLCVIAYVFGTLNYSTI), 204 to 224 (AYLINTDLLVLIMLALFIAAM), 244 to 264 (TPVSSLLHAATLVTAGIYLLL), 276 to 296 (VLFIILWIGALTTLSAGLIAI), 304 to 322 (IIALSTMSQLGMMTIAIGL), 332 to 354 (LLGHAFFKALLFMSAGSIIHSIL), 370 to 390 (LPYTYICITIASLSLMAMPGL), 413 to 433 (VVYWIAYLSAVLTCVYSMKIL), 456 to 476 (IYITLPMFILAIFAMFAGWIL), 516 to 536 (ISAILVSILIVVLNEFFAIVF), and 629 to 649 (LLLVLVMNVNFIIVIPVLISI).

Belongs to the complex I subunit 5 family. As to quaternary structure, complex I is composed of 37 different subunits.

The protein localises to the mitochondrion inner membrane. It carries out the reaction a ubiquinone + NADH + 5 H(+)(in) = a ubiquinol + NAD(+) + 4 H(+)(out). Core subunit of the mitochondrial membrane respiratory chain NADH dehydrogenase (Complex I) that is believed to belong to the minimal assembly required for catalysis. Complex I functions in the transfer of electrons from NADH to the respiratory chain. The immediate electron acceptor for the enzyme is believed to be ubiquinone. The polypeptide is NADH-ubiquinone oxidoreductase chain 5 (ND5) (Yarrowia lipolytica (strain CLIB 122 / E 150) (Yeast)).